Reading from the N-terminus, the 950-residue chain is Leucine--tRNA ligase 2 (950 aa).

Residues P47 to H57 carry the 'HIGH' region motif. A 'KMSKS' region motif is present at residues K631–S635. Residue K634 participates in ATP binding.

Belongs to the class-I aminoacyl-tRNA synthetase family.

Its subcellular location is the cytoplasm. The catalysed reaction is tRNA(Leu) + L-leucine + ATP = L-leucyl-tRNA(Leu) + AMP + diphosphate. The protein is Leucine--tRNA ligase 2 of Metallosphaera sedula (strain ATCC 51363 / DSM 5348 / JCM 9185 / NBRC 15509 / TH2).